A 692-amino-acid chain; its full sequence is MARQFPLEKTRNIGIMAHIDAGKTTTTERILFYTGRVHKIGEVHEGTATMDWMAQEQERGITITSAATSCRWRDCQINIIDTPGHVDFTVEVERSLRVLDGAVAVFCSVGGVEPQSETVWRQADKYGVPRIAYINKMDRVGADFHRGIQMIRERLGANPVAIQLPIGVEDGFCGVVDLVRNRAIIYTDDLGTTSEETEIPPELAGEAAAFRERLIEAVAEFDESLMEKYLENGELTEEEIKEGLRRATLAVKIVPVLCGSSFKNKGVQPLLDAIVDYLPAPTDIPAIRGVNPVSGAGEVREARDDEPFSALAFKIMTDPYVGKLTFFRVYSGRLKSGSYVYNSTRNRRERVGRILRMHANHREDIEEVCAGDIVAAVGLKTTTTGDTLCDEKEPVILESMEFPEPVIQVAIEPKTKADQEKMGVALQKLAEEDPTFRVSTDPETGQTLISGMGELHLEIIVDRMMREFKVEANVGRPQVAYKETVRKKARAEGKFIRQTGGRGQYGHVVLEVEPREPGSGYLFTSKIIGGVIPKEYIPAVDAGAKEAMENGVLAGFPVIDVGVTLLDGSYHEVDSSEMAFKIAGSIGFKDAARRADPVLLEPVMKVEVVVNEEYMGDVIGDLNSRRGRIEEMEARNGMQVIHAYVPLAEMFGYATDLRSRTQGRGNYTMQFSHYAQVPDNIAEGIIARRVGR.

The tr-type G domain occupies 8–282; sequence EKTRNIGIMA…AIVDYLPAPT (275 aa). Residues 17 to 24, 81 to 85, and 135 to 138 each bind GTP; these read AHIDAGKT, DTPGH, and NKMD.

The protein belongs to the TRAFAC class translation factor GTPase superfamily. Classic translation factor GTPase family. EF-G/EF-2 subfamily.

It is found in the cytoplasm. Its function is as follows. Catalyzes the GTP-dependent ribosomal translocation step during translation elongation. During this step, the ribosome changes from the pre-translocational (PRE) to the post-translocational (POST) state as the newly formed A-site-bound peptidyl-tRNA and P-site-bound deacylated tRNA move to the P and E sites, respectively. Catalyzes the coordinated movement of the two tRNA molecules, the mRNA and conformational changes in the ribosome. The sequence is that of Elongation factor G from Pelotomaculum thermopropionicum (strain DSM 13744 / JCM 10971 / SI).